The sequence spans 576 residues: Sodium/proton antiporter 1 (576 aa).

Residues methionine 1–arginine 60 constitute a chloroplast transit peptide. The next 9 helical transmembrane spans lie at threonine 237–threonine 257, leucine 279–valine 299, phenylalanine 320–valine 340, alanine 357–phenylalanine 377, alanine 379–leucine 399, glycine 426–leucine 446, leucine 462–alanine 482, leucine 501–valine 521, and phenylalanine 541–phenylalanine 561.

The protein belongs to the NhaD Na(+)/H(+) (TC 2.A.62) antiporter family. Mostly expressed in mature and senescent leaves, and, to a lower extent, in seeds, roots, shoots, flowers and developing siliques.

It is found in the plastid. It localises to the chloroplast membrane. Its subcellular location is the chloroplast envelope. Na(+)/H(+) antiporter that extrudes sodium in exchange for external protons. The sequence is that of Sodium/proton antiporter 1 from Arabidopsis thaliana (Mouse-ear cress).